Reading from the N-terminus, the 147-residue chain is 3-dehydroquinate dehydratase (147 aa).

Catalysis depends on Tyr26, which acts as the Proton acceptor. 3 residues coordinate substrate: Asn77, His83, and Asp90. Residue His103 is the Proton donor of the active site. Substrate contacts are provided by residues 104–105 and Arg114; that span reads LS.

The protein belongs to the type-II 3-dehydroquinase family. Homododecamer.

It carries out the reaction 3-dehydroquinate = 3-dehydroshikimate + H2O. The protein operates within metabolic intermediate biosynthesis; chorismate biosynthesis; chorismate from D-erythrose 4-phosphate and phosphoenolpyruvate: step 3/7. Catalyzes a trans-dehydration via an enolate intermediate. The polypeptide is 3-dehydroquinate dehydratase (Proteus mirabilis (strain HI4320)).